We begin with the raw amino-acid sequence, 308 residues long: C-4 methylsterol oxidase (308 aa).

Residues 56-76 (LLFFLTHEIFYFGRCLPWAII) traverse the membrane as a helical segment. Residues 145–282 (WAVFFVLEDT…FRWWDFILDT (138 aa)) enclose the Fatty acid hydroxylase domain. A Histidine box-1 motif is present at residues 160–164 (HRGLH). Positions 173–177 (HKQHH) match the Histidine box-2 motif. Positions 257–263 (HHDEHHH) match the Histidine box-3 motif.

Belongs to the sterol desaturase family. Fe cation serves as cofactor.

The protein resides in the endoplasmic reticulum membrane. It carries out the reaction 4,4-dimethyl-5alpha-cholest-7-en-3beta-ol + 6 Fe(II)-[cytochrome b5] + 3 O2 + 5 H(+) = 4alpha-carboxy-4beta-methyl-5alpha-cholest-7-ene-3beta-ol + 6 Fe(III)-[cytochrome b5] + 4 H2O. It functions in the pathway steroid biosynthesis; zymosterol biosynthesis; zymosterol from lanosterol: step 3/6. Its function is as follows. C-4 methylsterol oxidase; part of the third module of ergosterol biosynthesis pathway that includes the late steps of the pathway. ERG25 is a catalytic component of the C-4 demethylation complex that catalyzes the conversion of 4,4-dimethylfecosterol into fecosterol via 4-methylfecosterol. Catalyzes the three-step monooxygenation required for the demethylation of 4,4-dimethyl and 4alpha-methylsterols. The third module or late pathway involves the ergosterol synthesis itself through consecutive reactions that mainly occur in the endoplasmic reticulum (ER) membrane. Firstly, the squalene synthase ERG9 catalyzes the condensation of 2 farnesyl pyrophosphate moieties to form squalene, which is the precursor of all steroids. Squalene synthase is crucial for balancing the incorporation of farnesyl diphosphate (FPP) into sterol and nonsterol isoprene synthesis. Secondly, the squalene epoxidase ERG1 catalyzes the stereospecific oxidation of squalene to (S)-2,3-epoxysqualene, which is considered to be a rate-limiting enzyme in steroid biosynthesis. Then, the lanosterol synthase ERG7 catalyzes the cyclization of (S)-2,3 oxidosqualene to lanosterol, a reaction that forms the sterol core. In the next steps, lanosterol is transformed to zymosterol through a complex process involving various demethylation, reduction and desaturation reactions. The lanosterol 14-alpha-demethylase ERG11 (also known as CYP51) catalyzes C14-demethylation of lanosterol to produce 4,4'-dimethyl cholesta-8,14,24-triene-3-beta-ol, which is critical for ergosterol biosynthesis. The C-14 reductase ERG24 reduces the C14=C15 double bond of 4,4-dimethyl-cholesta-8,14,24-trienol to produce 4,4-dimethyl-cholesta-8,24-dienol. 4,4-dimethyl-cholesta-8,24-dienol is substrate of the C-4 demethylation complex ERG25-ERG26-ERG27 in which ERG25 catalyzes the three-step monooxygenation required for the demethylation of 4,4-dimethyl and 4alpha-methylsterols, ERG26 catalyzes the oxidative decarboxylation that results in a reduction of the 3-beta-hydroxy group at the C-3 carbon to an oxo group, and ERG27 is responsible for the reduction of the keto group on the C-3. ERG28 has a role as a scaffold to help anchor ERG25, ERG26 and ERG27 to the endoplasmic reticulum and ERG29 regulates the activity of the iron-containing C4-methylsterol oxidase ERG25. Then, the sterol 24-C-methyltransferase ERG6 catalyzes the methyl transfer from S-adenosyl-methionine to the C-24 of zymosterol to form fecosterol. The C-8 sterol isomerase ERG2 catalyzes the reaction which results in unsaturation at C-7 in the B ring of sterols and thus converts fecosterol to episterol. The sterol-C5-desaturase ERG3 then catalyzes the introduction of a C-5 double bond in the B ring to produce 5-dehydroepisterol. The C-22 sterol desaturase ERG5 further converts 5-dehydroepisterol into ergosta-5,7,22,24(28)-tetraen-3beta-ol by forming the C-22(23) double bond in the sterol side chain. Finally, ergosta-5,7,22,24(28)-tetraen-3beta-ol is substrate of the C-24(28) sterol reductase ERG4 to produce ergosterol. In Candida albicans (strain SC5314 / ATCC MYA-2876) (Yeast), this protein is C-4 methylsterol oxidase.